An 876-amino-acid polypeptide reads, in one-letter code: Monofunctional isopimaradiene synthase, chloroplastic (876 aa).

The N-terminal 64 residues, 1–64, are a transit peptide targeting the chloroplast; that stretch reads MAMPSYSSLS…YLRLGSRKII (64 aa). Mg(2+) is bound by residues D628, D632, N772, T776, and E780. Positions 628-632 match the DDXXD motif motif; the sequence is DDLYD.

It belongs to the terpene synthase family. Tpsd subfamily. Mg(2+) is required as a cofactor.

The protein localises to the plastid. It localises to the chloroplast. The catalysed reaction is (+)-copalyl diphosphate = isopimara-7,15-diene + diphosphate. The protein operates within terpene metabolism; oleoresin biosynthesis. Its function is as follows. Involved in defensive oleoresin formation in conifers in response to insect attack or other injury. Involved in diterpene (C20) olefins biosynthesis. Monofunctional enzyme lacking the DXDD motif in the class II active site relevant for the cyclization of geranylgeranyl diphosphate (GGPP). Requires (+)-copalyl diphosphate ((+)-CPP) as substrate, but no activity with GGPP or ent-CPP. Isopimaradiene is the major products of the enzyme followed by sandaracopimaradiene. The polypeptide is Monofunctional isopimaradiene synthase, chloroplastic (Pinus contorta (Shore pine)).